We begin with the raw amino-acid sequence, 197 residues long: NADH-quinone oxidoreductase subunit C (197 aa).

It belongs to the complex I 30 kDa subunit family. NDH-1 is composed of 14 different subunits. Subunits NuoB, C, D, E, F, and G constitute the peripheral sector of the complex.

Its subcellular location is the cell inner membrane. It carries out the reaction a quinone + NADH + 5 H(+)(in) = a quinol + NAD(+) + 4 H(+)(out). NDH-1 shuttles electrons from NADH, via FMN and iron-sulfur (Fe-S) centers, to quinones in the respiratory chain. The immediate electron acceptor for the enzyme in this species is believed to be ubiquinone. Couples the redox reaction to proton translocation (for every two electrons transferred, four hydrogen ions are translocated across the cytoplasmic membrane), and thus conserves the redox energy in a proton gradient. The polypeptide is NADH-quinone oxidoreductase subunit C (Neisseria gonorrhoeae (strain ATCC 700825 / FA 1090)).